Consider the following 204-residue polypeptide: FMN-dependent NADH:quinone oxidoreductase (204 aa).

FMN contacts are provided by residues S9 and 15–17 (SAS).

Belongs to the azoreductase type 1 family. In terms of assembly, homodimer. Requires FMN as cofactor.

The catalysed reaction is 2 a quinone + NADH + H(+) = 2 a 1,4-benzosemiquinone + NAD(+). The enzyme catalyses N,N-dimethyl-1,4-phenylenediamine + anthranilate + 2 NAD(+) = 2-(4-dimethylaminophenyl)diazenylbenzoate + 2 NADH + 2 H(+). In terms of biological role, quinone reductase that provides resistance to thiol-specific stress caused by electrophilic quinones. Functionally, also exhibits azoreductase activity. Catalyzes the reductive cleavage of the azo bond in aromatic azo compounds to the corresponding amines. This Xanthomonas campestris pv. campestris (strain ATCC 33913 / DSM 3586 / NCPPB 528 / LMG 568 / P 25) protein is FMN-dependent NADH:quinone oxidoreductase.